Here is a 130-residue protein sequence, read N- to C-terminus: Small ribosomal subunit protein uS8 (130 aa).

Belongs to the universal ribosomal protein uS8 family. In terms of assembly, part of the 30S ribosomal subunit.

Functionally, one of the primary rRNA binding proteins, it binds directly to 16S rRNA central domain where it helps coordinate assembly of the platform of the 30S subunit. The sequence is that of Small ribosomal subunit protein uS8 from Haloquadratum walsbyi (strain DSM 16790 / HBSQ001).